Here is a 623-residue protein sequence, read N- to C-terminus: uncharacterized protein (623 aa).

The 144-residue stretch at 28–171 folds into the GAF domain; it reads TSAEVSQRVL…TIATLFAQVQ (144 aa). The region spanning 212 to 345 is the GGDEF domain; sequence GPVAALFLDL…GGDSVAIFTA (134 aa). Residues 354–609 enclose the EAL domain; the sequence is RNDIELHLRR…AMRHMLSARR (256 aa).

This is an uncharacterized protein from Mycobacterium tuberculosis (strain CDC 1551 / Oshkosh).